Here is an 85-residue protein sequence, read N- to C-terminus: Large ribosomal subunit protein bL27 (85 aa).

The segment at 1 to 21 (MAHKKGVGSSRNGRDSDGQRL) is disordered.

The protein belongs to the bacterial ribosomal protein bL27 family.

In Geobacter sp. (strain M21), this protein is Large ribosomal subunit protein bL27.